A 443-amino-acid chain; its full sequence is Arginine biosynthesis bifunctional protein ArgJ, mitochondrial (443 aa).

Residues T179, K206, T217, E303, N438, and S443 each contribute to the substrate site. Residue T217 is the Nucleophile of the active site.

The protein belongs to the ArgJ family. Heterodimer of an alpha and a beta chain. The alpha and beta chains are autoproteolytically processed from a single precursor protein within the mitochondrion.

Its subcellular location is the mitochondrion matrix. The catalysed reaction is N(2)-acetyl-L-ornithine + L-glutamate = N-acetyl-L-glutamate + L-ornithine. The enzyme catalyses L-glutamate + acetyl-CoA = N-acetyl-L-glutamate + CoA + H(+). It participates in amino-acid biosynthesis; L-arginine biosynthesis; L-ornithine and N-acetyl-L-glutamate from L-glutamate and N(2)-acetyl-L-ornithine (cyclic): step 1/1. The protein operates within amino-acid biosynthesis; L-arginine biosynthesis; N(2)-acetyl-L-ornithine from L-glutamate: step 1/4. In terms of biological role, catalyzes two activities which are involved in the cyclic version of arginine biosynthesis: the synthesis of acetylglutamate from glutamate and acetyl-CoA, and of ornithine by transacetylation between acetylornithine and glutamate. The sequence is that of Arginine biosynthesis bifunctional protein ArgJ, mitochondrial from Eremothecium gossypii (strain ATCC 10895 / CBS 109.51 / FGSC 9923 / NRRL Y-1056) (Yeast).